A 79-amino-acid chain; its full sequence is Small ribosomal subunit protein bS16 (79 aa).

It belongs to the bacterial ribosomal protein bS16 family.

This Desulfovibrio desulfuricans (strain ATCC 27774 / DSM 6949 / MB) protein is Small ribosomal subunit protein bS16.